Reading from the N-terminus, the 469-residue chain is Sorting and assembly machinery component 50 homolog (469 aa).

Residues 45 to 125 (VVVQHVHFDG…LDVTFEVTEL (81 aa)) form the POTRA domain. N6-methyllysine is present on K255.

The protein belongs to the SAM50/omp85 family. Associates with the mitochondrial contact site and cristae organizing system (MICOS) complex, composed of at least MICOS10/MIC10, CHCHD3/MIC19, CHCHD6/MIC25, APOOL/MIC27, IMMT/MIC60, APOO/MIC23/MIC26 and QIL1/MIC13. This complex was also known under the names MINOS or MitOS complex. The MICOS complex associates with mitochondrial outer membrane proteins SAMM50, MTX1 and MTX2 (together described as components of the mitochondrial outer membrane sorting assembly machinery (SAM) complex) and DNAJC11, mitochondrial inner membrane protein TMEM11 and with HSPA9. The MICOS and SAM complexes together with DNAJC11 are part of a large protein complex spanning both membranes termed the mitochondrial intermembrane space bridging (MIB) complex. Interacts with IMMT/MIC60. Interacts with CHCHD3/MIC19. Interacts with ARMC1.

Its subcellular location is the mitochondrion outer membrane. It localises to the cytoplasm. The protein resides in the mitochondrion. In terms of biological role, plays a crucial role in the maintenance of the structure of mitochondrial cristae and the proper assembly of the mitochondrial respiratory chain complexes. Required for the assembly of TOMM40 into the TOM complex. The polypeptide is Sorting and assembly machinery component 50 homolog (SAMM50) (Bos taurus (Bovine)).